Reading from the N-terminus, the 95-residue chain is Small ribosomal subunit protein uS17 (95 aa).

The protein belongs to the universal ribosomal protein uS17 family. Part of the 30S ribosomal subunit.

Its function is as follows. One of the primary rRNA binding proteins, it binds specifically to the 5'-end of 16S ribosomal RNA. The protein is Small ribosomal subunit protein uS17 of Streptomyces coelicolor (strain ATCC BAA-471 / A3(2) / M145).